We begin with the raw amino-acid sequence, 682 residues long: Glutamine--fructose-6-phosphate aminotransferase [isomerizing] 2 (682 aa).

Cysteine 2 acts as the For GATase activity in catalysis. In terms of domain architecture, Glutamine amidotransferase type-2 spans 2–288 (CGIFAYMNYR…DDDIAAVADG (287 aa)). Serine 244 carries the post-translational modification Phosphoserine. SIS domains are found at residues 360 to 499 (HLKE…DRIS) and 531 to 672 (LALE…VDFP). Residues 377–378 (TS), 422–424 (SQS), threonine 427, and histidine 578 each bind substrate.

The catalysed reaction is D-fructose 6-phosphate + L-glutamine = D-glucosamine 6-phosphate + L-glutamate. Its pathway is nucleotide-sugar biosynthesis; UDP-N-acetyl-alpha-D-glucosamine biosynthesis; alpha-D-glucosamine 6-phosphate from D-fructose 6-phosphate: step 1/1. In terms of biological role, controls the flux of glucose into the hexosamine pathway. Most likely involved in regulating the availability of precursors for N- and O-linked glycosylation of proteins. This is Glutamine--fructose-6-phosphate aminotransferase [isomerizing] 2 (Gfpt2) from Mus musculus (Mouse).